Here is a 340-residue protein sequence, read N- to C-terminus: Phenylalanine--tRNA ligase alpha subunit (340 aa).

Residue E255 participates in Mg(2+) binding.

This sequence belongs to the class-II aminoacyl-tRNA synthetase family. Phe-tRNA synthetase alpha subunit type 1 subfamily. In terms of assembly, tetramer of two alpha and two beta subunits. Mg(2+) serves as cofactor.

It is found in the cytoplasm. It carries out the reaction tRNA(Phe) + L-phenylalanine + ATP = L-phenylalanyl-tRNA(Phe) + AMP + diphosphate + H(+). This is Phenylalanine--tRNA ligase alpha subunit from Desulfitobacterium hafniense (strain DSM 10664 / DCB-2).